Here is a 2364-residue protein sequence, read N- to C-terminus: Cytotoxin-L (2364 aa).

The interval 1–91 is four-helical bundle; that stretch reads MNLVNKAQLQ…EVLELKNNSL (91 aa). Residues 96-468 form the GT44 domain; that stretch reads KNLHFIWIGG…APDVRSTINL (373 aa). A glucosyltransferase region region spans residues 96-468; sequence KNLHFIWIGG…APDVRSTINL (373 aa). UDP-alpha-D-glucose is bound by residues 101-103, Asn139, 265-270, and 286-288; these read IWI, LAAASD, and DVD. Mg(2+)-binding residues include Asp288, Glu515, and Ser518. UDP-alpha-D-glucose is bound at residue 518–520; that stretch reads SLW. An autoprocessing region region spans residues 544–799; it reads GEDDNLDFAQ…KSKYLHELST (256 aa). Zn(2+) is bound by residues Glu545 and Asp546. Residues 567-774 form the Peptidase C80 domain; that stretch reads LSSMKTRNKE…EESIIKDISS (208 aa). 1D-myo-inositol hexakisphosphate contacts are provided by Tyr577, Lys600, and Lys647. His653 lines the Zn(2+) pocket. His653 acts as the For protease activity in catalysis. The active-site Nucleophile; for protease activity is Cys698. Zn(2+) is bound at residue His757. The 1D-myo-inositol hexakisphosphate site is built by Lys764, Lys775, and Lys792. The translocation region stretch occupies residues 800–1500; sequence LLQEIRNNAN…ESIIRNIYMP (701 aa). 5 interaction with host SEMA6A and SEMA6B regions span residues 1433–1438, 1466–1471, 1484–1495, 1504–1511, and 1596–1601; these read CMKLIE, DNETKY, FTAEFSNESIIR, NLFIYSSK, and YNNLDP. Cell wall-binding repeat units lie at residues 1813 to 1832, 1833 to 1852, 1854 to 1873, 1876 to 1895, 1926 to 1945, 1946 to 1965, 1967 to 1986, 1987 to 2006, 2007 to 2026, 2057 to 2076, 2077 to 2097, 2099 to 2118, 2119 to 2138, 2139 to 2158, 2209 to 2224, 2227 to 2249, 2250 to 2269, 2270 to 2289, 2320 to 2339, and 2340 to 2359; these read EFGL…FGNM, VSGL…PKNN, ITGF…TKSG, SIGE…QGIL, FIGK…NYRA, AVEW…KTGE, LKGL…NGIM, QTGF…DGVM, QVGY…NGER, YNGI…SNTA, VVGW…NRAE, CIGL…NGIR, QLGF…SGKI, ELGY…SGLV, ETGW…YFDP, KKAY…NGIM, RTGL…DGKM, QFGY…DGKM, YTGW…EYIA, and ATGS…DTAE. The segment at 1835–2364 is receptor-binding (CROPS) region; that stretch reads GLIYINDSLY…PDTAELVVSE (530 aa).

The protein belongs to the clostridial glucosylating toxin (LCGT) family. Homomultimer; forms an inactive homomultimer at pH 8, which dissociates at pH 4, leading to cytotoxicity. Interacts with host SEMA6A; interaction promotes toxin entry into host cell. Interacts with host SEMA6B; interaction promotes toxin entry into host cell. Zn(2+) serves as cofactor. Requires Mn(2+) as cofactor. It depends on Mg(2+) as a cofactor. Post-translationally, undergoes autocatalytic cleavage to release the N-terminal part (Glucosyltransferase TcsL), which constitutes the active part of the toxin, in the host cytosol. 1D-myo-inositol hexakisphosphate-binding (InsP6) activates the peptidase C80 domain and promotes autoprocessing.

The protein localises to the secreted. It localises to the host endosome membrane. It is found in the host cytoplasm. The protein resides in the host cytosol. Its subcellular location is the host cell membrane. It carries out the reaction L-threonyl-[protein] + UDP-alpha-D-glucose = 3-O-(alpha-D-glucosyl)-L-threonyl-[protein] + UDP + H(+). Its activity is regulated as follows. Protease activity is activated upon binding to 1D-myo-inositol hexakisphosphate (InsP6), which induces conformational reorganization. Functionally, precursor of a cytotoxin that targets the vascular endothelium, inducing an anti-inflammatory effect and resulting in lethal toxic shock syndrome. TcsL constitutes the main toxin that mediates the pathology of P.sordellii infection, an anaerobic Gram-positive bacterium found in soil and in the gastrointestinal and vaginal tracts of animals and humans; although the majority of carriers are asymptomatic, pathogenic P.sordellii infections arise rapidly and are highly lethal. This form constitutes the precursor of the toxin: it enters into host cells and mediates autoprocessing to release the active toxin (Glucosyltransferase TcsL) into the host cytosol. Targets vascular endothelium by binding to the semaphorin proteins SEMA6A and SEMA6B, and enters host cells via clathrin-mediated endocytosis. Once entered into host cells, acidification in the endosome promotes the membrane insertion of the translocation region and formation of a pore, leading to translocation of the GT44 and peptidase C80 domains across the endosomal membrane. This activates the peptidase C80 domain and autocatalytic processing, releasing the N-terminal part (Glucosyltransferase TcsL), which constitutes the active part of the toxin, in the cytosol. In terms of biological role, active form of the toxin, which is released into the host cytosol following autoprocessing and inactivates small GTPases. Acts by mediating monoglucosylation of small GTPases of the Ras (H-Ras/HRAS, K-Ras/KRAS, N-Ras/NRAS and Ral/RALA) family in host cells at the conserved threonine residue located in the switch I region ('Thr-37/35'), using UDP-alpha-D-glucose as the sugar donor. Also able to catalyze monoglucosylation of some members of the Rho family (Rac1 and Rap2A), but with less efficiency than with Ras proteins. Monoglucosylation of host small GTPases completely prevents the recognition of the downstream effector, blocking the GTPases in their inactive form and leading to apoptosis. Induces an anti-inflammatory effect, mainly by inactivating Ras proteins which results in blockage of the cell cycle and killing of immune cells. The absence or moderate local inflammatory response allows C.sordellii spreading in deep tissues, production of toxin which is released in the general circulation and causes a toxic shock syndrome. The protein is Cytotoxin-L of Paraclostridium sordellii (Clostridium sordellii).